Here is a 430-residue protein sequence, read N- to C-terminus: Forkhead box protein N2 (430 aa).

The interval 1 to 47 (MGPATGMTPDKNIESPTAEKVPGLSQTENMGSLPEEVGAARPKASMV) is disordered. A DNA-binding region (fork-head) is located at residues 108–204 (KPPYSFSLLI…QALKKQPFSS (97 aa)). 2 disordered regions span residues 299–326 (NIDP…SVSS) and 338–391 (PKNS…EASQ). Positions 355–366 (DDTDIDYEEDTL) are enriched in acidic residues. Residues 381–390 (HGSKLRKEAS) show a composition bias toward basic and acidic residues.

Expressed in the developing eye from stage 23. Localized to the prospective retinal layer and a layer of cells lateral to the ventricular zone. At stage 29, expression extends to the branchial arches and the brain. At stage 33/34, expressed in the vagal ganglion. At stage 36, expression in the retina decreases. Not expressed in the eye lens.

The protein localises to the nucleus. In Xenopus laevis (African clawed frog), this protein is Forkhead box protein N2.